We begin with the raw amino-acid sequence, 40 residues long: Large ribosomal subunit protein bL36 (40 aa).

This sequence belongs to the bacterial ribosomal protein bL36 family.

This chain is Large ribosomal subunit protein bL36, found in Corynebacterium aurimucosum (strain ATCC 700975 / DSM 44827 / CIP 107346 / CN-1) (Corynebacterium nigricans).